The following is a 96-amino-acid chain: MEHKEVVLLLLLFLKSGQGEPLDDYVNAQGASLFSVTKKQLGAGSREECAAKCEEDKEFTCRAFQYHSKEQQCVIMAENKKSSIIIRMRDVVLFEK.

A signal peptide spans Met1 to Gly19. The 77-residue stretch at Glu20–Lys96 folds into the PAN domain. Cystine bridges form between Cys49–Cys73 and Cys53–Cys61.

In terms of tissue distribution, expressed in liver.

It localises to the secreted. In terms of biological role, may bind non-covalently to lysine binding sites present in the kringle structures of plasminogen. This may interfere with the binding of fibrin or alpha-2-antiplasmin to plasminogen and may result in the localization of activity at sites necessary for extracellular matrix destruction. This Homo sapiens (Human) protein is Plasminogen-like protein A (PLGLA).